A 332-amino-acid chain; its full sequence is MVPREVPESSLTSLKTKDVARRRHKRRSRQHQRFMARKALLQEQESLSMVPGPGLCPLPSPTQTPAGTEASGNRKQRTKARSGSKGLCSKRPVPREAPSSGPSKYVAIDCEMVGTGPQGRVSELARCSVVSYSGDVLYDKYIRPEMPIVDYRTRWSGITRQHMHKAIPFQVAQKEILKLLKGKVVVGHALHNDFQALKYVHPGSQIRDTTYVPNLLSQPSSLTRARVSLKDLALNLLHKKIQVGHHGHSSVEDAMTAMELYQLVEVQWEQQVASTAKAHPEDRGPDSSTDVEQYMDDQYWPEDLAQSTRGDTREAQDRQEGEEGQGARSAPP.

Residues 1 to 102 are disordered; it reads MVPREVPESS…VPREAPSSGP (102 aa). Residues 20-36 show a composition bias toward basic residues; that stretch reads ARRRHKRRSRQHQRFMA. The Nucleolar localization signal motif lies at 21–29; sequence RRRHKRRSR. The segment covering 63–73 has biased composition (polar residues); the sequence is QTPAGTEASGN. Residues 105–261 form the Exonuclease domain; that stretch reads YVAIDCEMVG…EDAMTAMELY (157 aa). A Nuclear localization signal motif is present at residues 160-183; sequence RQHMHKAIPFQVAQKEILKLLKGK. The tract at residues 272-332 is disordered; that stretch reads VASTAKAHPE…EGQGARSAPP (61 aa). Basic and acidic residues predominate over residues 310 to 321; that stretch reads GDTREAQDRQEG.

It localises to the nucleus. The protein resides in the nucleolus. Functionally, exonuclease with activity against single- and double-stranded DNA and RNA. Mediates p53-induced apoptosis. When induced by p53 following DNA damage, digests double-stranded DNA to form single-stranded DNA and amplifies DNA damage signals, leading to enhancement of apoptosis. The polypeptide is Apoptosis-enhancing nuclease (Rattus norvegicus (Rat)).